The following is a 144-amino-acid chain: Large ribosomal subunit protein uL15 (144 aa).

Residues 1 to 56 form a disordered region; it reads MELNNLKPAAGAKHAKRRVGRGIGSGLGKTAGRGHKGQKSRSGGFHKVGFEGGQMP. The span at 21–31 shows a compositional bias: gly residues; it reads RGIGSGLGKTA.

This sequence belongs to the universal ribosomal protein uL15 family. In terms of assembly, part of the 50S ribosomal subunit.

Binds to the 23S rRNA. This chain is Large ribosomal subunit protein uL15, found in Burkholderia ambifaria (strain MC40-6).